A 208-amino-acid polypeptide reads, in one-letter code: Imidazoleglycerol-phosphate dehydratase (208 aa).

Residues 1 to 20 are disordered; the sequence is MSRRATVKAPRAGAAARRGA. The span at 7–19 shows a compositional bias: low complexity; the sequence is VKAPRAGAAARRG.

This sequence belongs to the imidazoleglycerol-phosphate dehydratase family.

It is found in the cytoplasm. The catalysed reaction is D-erythro-1-(imidazol-4-yl)glycerol 3-phosphate = 3-(imidazol-4-yl)-2-oxopropyl phosphate + H2O. It functions in the pathway amino-acid biosynthesis; L-histidine biosynthesis; L-histidine from 5-phospho-alpha-D-ribose 1-diphosphate: step 6/9. The chain is Imidazoleglycerol-phosphate dehydratase from Anaeromyxobacter sp. (strain K).